The sequence spans 139 residues: Large ribosomal subunit protein eL32 (139 aa).

Belongs to the eukaryotic ribosomal protein eL32 family.

The polypeptide is Large ribosomal subunit protein eL32 (RPL32) (Encephalitozoon cuniculi (strain GB-M1) (Microsporidian parasite)).